The primary structure comprises 879 residues: Pyruvate dehydrogenase phosphatase regulatory subunit, mitochondrial (879 aa).

The transit peptide at 1-27 (MMFYRLLSIVGRQRASPGWQNWSSARN) directs the protein to the mitochondrion.

The protein belongs to the GcvT family. As to quaternary structure, heterodimer of a catalytic (PDP1) and a regulatory (PDPR) subunit.

It is found in the mitochondrion matrix. Decreases the sensitivity of PDP1 to magnesium ions, and this inhibition is reversed by the polyamine spermine. The chain is Pyruvate dehydrogenase phosphatase regulatory subunit, mitochondrial (PDPR) from Homo sapiens (Human).